Here is a 175-residue protein sequence, read N- to C-terminus: NADH-ubiquinone oxidoreductase chain 6 (175 aa).

The next 5 membrane-spanning stretches (helical) occupy residues 1 to 21 (MVTYIVFVLSIIFVISFVGVS), 25 to 45 (SPIYGGLGLIVGGGAGCGVVL), 47 to 67 (FGGSFLGLMVFLIYLGGMLVV), 88 to 108 (VVLGAFILGLVVESLIVIYAL), and 149 to 169 (YGVWLVIVTGWSLFVSVVIIM).

Belongs to the complex I subunit 6 family. As to quaternary structure, core subunit of respiratory chain NADH dehydrogenase (Complex I) which is composed of 45 different subunits.

Its subcellular location is the mitochondrion inner membrane. It carries out the reaction a ubiquinone + NADH + 5 H(+)(in) = a ubiquinol + NAD(+) + 4 H(+)(out). Core subunit of the mitochondrial membrane respiratory chain NADH dehydrogenase (Complex I) which catalyzes electron transfer from NADH through the respiratory chain, using ubiquinone as an electron acceptor. Essential for the catalytic activity and assembly of complex I. The chain is NADH-ubiquinone oxidoreductase chain 6 (MT-ND6) from Balaenoptera musculus (Blue whale).